A 116-amino-acid chain; its full sequence is Large ribosomal subunit protein bL20 (116 aa).

The protein belongs to the bacterial ribosomal protein bL20 family.

Functionally, binds directly to 23S ribosomal RNA and is necessary for the in vitro assembly process of the 50S ribosomal subunit. It is not involved in the protein synthesizing functions of that subunit. The protein is Large ribosomal subunit protein bL20 of Acaryochloris marina (strain MBIC 11017).